A 385-amino-acid polypeptide reads, in one-letter code: Cell wall mannoprotein PIR1 (385 aa).

Positions 1-18 are cleaved as a signal peptide; the sequence is MKYSTLVSIAAFISTSLA. PIR1/2/3 repeat units follow at residues 78-96, 97-115, 116-133, 136-153, 154-171, 173-190, 191-208, 210-228, and 233-251; these read ATPVAQITDGQVQHQTTGG, VSAIKQISDGQVQHQTNAA, QPIAQISDGQIQHQTTAK, ATPVQQINDGQIQHQTTV, QPVAQISDGQIQHQTAKA, ATPVQQIGDGQIQHQTTV, QPVAQISDGQIQHQTVKA, ATPVQQIGDGQIQHQTTAA, and ASAVKQINDGQIQHQTTTA. The interval 257–282 is disordered; the sequence is AQSDGQAIATGSPSSNSTLSDDDDLS. Asn272 carries an N-linked (GlcNAc...) asparagine glycan.

Belongs to the PIR protein family. In terms of processing, covalently linked to beta-1,3-glucan of the inner cell wall layer via an alkali-sensitive ester linkage between the gamma-carboxyl group of glutamic acids, arising from specific glutamines within the PIR1/2/3 repeats, and hydroxyl groups of glucoses of beta-1,3-glucan chains. Post-translationally, highly O-glycosylated by PMT1 and contains one N-mannosylated chain.

It is found in the secreted. The protein localises to the cell wall. Its function is as follows. Component of the outer cell wall layer required for stability of the cell wall and specifically for cell wall rigidity. The protein is Cell wall mannoprotein PIR1 (PIR1) of Candida albicans (strain SC5314 / ATCC MYA-2876) (Yeast).